We begin with the raw amino-acid sequence, 301 residues long: Light-independent protochlorophyllide reductase iron-sulfur ATP-binding protein (301 aa).

A compositionally biased stretch (low complexity) spans 1–13 (MNVTLRPPLAAAP). The tract at residues 1–22 (MNVTLRPPLAAAPRRPDGAGSV) is disordered. ATP-binding positions include 45 to 50 (GIGKST) and lysine 74. Serine 49 is a Mg(2+) binding site. Positions 130 and 164 each coordinate [4Fe-4S] cluster. Residues 215-216 (NR) and 239-241 (PDL) contribute to the ATP site.

This sequence belongs to the NifH/BchL/ChlL family. In terms of assembly, homodimer. Protochlorophyllide reductase is composed of three subunits; BchL, BchN and BchB. [4Fe-4S] cluster serves as cofactor.

The enzyme catalyses chlorophyllide a + oxidized 2[4Fe-4S]-[ferredoxin] + 2 ADP + 2 phosphate = protochlorophyllide a + reduced 2[4Fe-4S]-[ferredoxin] + 2 ATP + 2 H2O. It functions in the pathway porphyrin-containing compound metabolism; bacteriochlorophyll biosynthesis (light-independent). Functionally, component of the dark-operative protochlorophyllide reductase (DPOR) that uses Mg-ATP and reduced ferredoxin to reduce ring D of protochlorophyllide (Pchlide) to form chlorophyllide a (Chlide). This reaction is light-independent. The L component serves as a unique electron donor to the NB-component of the complex, and binds Mg-ATP. This is Light-independent protochlorophyllide reductase iron-sulfur ATP-binding protein from Bradyrhizobium sp. (strain ORS 278).